The following is a 353-amino-acid chain: MTIALGKFTKDENDLFDIMDDWLRRDRFVFVGWSGLLLFPCAYFALGGWFTGTTFVTSWYTHGLASSYLEGCNFLTAAVSTPANSLAHSLLLLWGPEAQGDFTRWCQLGGLWTFVALHGAFGLIGFMLRQFELARSVQLRPYNAIAFSAPIAVFVSVFLIYPLGQSGWFFAPSFGVAAIFRFILFFQGFHNWTLNPFHMMGVAGVLGAALLCAIHGATVENTLFEDGDGANTFRAFNPTQAEETYSMVTANRFWSQIFGVAFSNKRWLHFFMLFVPVTGLWMSALGVVGLALNLRAYDFVSQEIRAAEDPEFETFYTKNILLNEGIRAWMAAQDQPHENLIFPEEVLPRGNAL.

Thr2 bears the N-acetylthreonine mark. Thr2 is subject to Phosphothreonine. A helical transmembrane segment spans residues 41 to 61; that stretch reads CAYFALGGWFTGTTFVTSWYT. His118 provides a ligand contact to chlorophyll a. The helical transmembrane segment at 125-141 threads the bilayer; sequence GFMLRQFELARSVQLRP. Pheophytin a contacts are provided by Gln130 and Asn143. A helical membrane pass occupies residues 153 to 166; it reads VFVSVFLIYPLGQS. His198 serves as a coordination point for chlorophyll a. Residues 208 to 228 traverse the membrane as a helical segment; the sequence is AALLCAIHGATVENTLFEDGD. 2 residues coordinate a plastoquinone: His215 and Phe262. His215 contributes to the Fe cation binding site. Fe cation is bound at residue His269. Residues 279-295 form a helical membrane-spanning segment; sequence GLWMSALGVVGLALNLR.

The protein belongs to the reaction center PufL/M/PsbA/D family. PSII is composed of 1 copy each of membrane proteins PsbA, PsbB, PsbC, PsbD, PsbE, PsbF, PsbH, PsbI, PsbJ, PsbK, PsbL, PsbM, PsbT, PsbX, PsbY, PsbZ, Psb30/Ycf12, at least 3 peripheral proteins of the oxygen-evolving complex and a large number of cofactors. It forms dimeric complexes. The D1/D2 heterodimer binds P680, chlorophylls that are the primary electron donor of PSII, and subsequent electron acceptors. It shares a non-heme iron and each subunit binds pheophytin, quinone, additional chlorophylls, carotenoids and lipids. There is also a Cl(-1) ion associated with D1 and D2, which is required for oxygen evolution. The PSII complex binds additional chlorophylls, carotenoids and specific lipids. is required as a cofactor.

The protein localises to the plastid. Its subcellular location is the chloroplast thylakoid membrane. The enzyme catalyses 2 a plastoquinone + 4 hnu + 2 H2O = 2 a plastoquinol + O2. In terms of biological role, photosystem II (PSII) is a light-driven water:plastoquinone oxidoreductase that uses light energy to abstract electrons from H(2)O, generating O(2) and a proton gradient subsequently used for ATP formation. It consists of a core antenna complex that captures photons, and an electron transfer chain that converts photonic excitation into a charge separation. The D1/D2 (PsbA/PsbD) reaction center heterodimer binds P680, the primary electron donor of PSII as well as several subsequent electron acceptors. D2 is needed for assembly of a stable PSII complex. In Coffea arabica (Arabian coffee), this protein is Photosystem II D2 protein.